Here is a 200-residue protein sequence, read N- to C-terminus: Histone H1 (200 aa).

The span at 1–14 shows a compositional bias: low complexity; sequence MPPKKAPTTAKKAA. 2 disordered regions span residues 1–20 and 78–200; these read MPPKKAPTTAKKAASGPTHT and DFIQ…NKKA. Residues 18 to 93 form the H15 domain; that stretch reads THTSYRDMIK…GTSGPVKLAK (76 aa). The span at 94–116 shows a compositional bias: low complexity; it reads KQAPAKPAPKKPATTTKTAAPKK. Over residues 120 to 131 the composition is skewed to basic and acidic residues; the sequence is KKADKAEKAEKP. The segment covering 159 to 185 has biased composition (low complexity); sequence TAAPAVVDKPKVVSVTKSGRKTTTTAK.

The protein belongs to the histone H1/H5 family.

Its subcellular location is the nucleus. The protein resides in the chromosome. In terms of biological role, could act as an H1-type linker histone. In Emericella nidulans (strain FGSC A4 / ATCC 38163 / CBS 112.46 / NRRL 194 / M139) (Aspergillus nidulans), this protein is Histone H1 (hhoA).